A 124-amino-acid polypeptide reads, in one-letter code: Insulin-like growth factor 1 (124 aa).

The propeptide occupies 1–19; it reads IHFFYLGLCLLTLTSSAAA. Residues 20–48 form a b region; the sequence is GPETLCGAELVDALQFVCGDRGFYFSKPT. 3 cysteine pairs are disulfide-bonded: Cys25-Cys67, Cys37-Cys80, and Cys66-Cys71. The c stretch occupies residues 49-60; it reads GYGSSSRRLHHK. The segment at 61–81 is a; it reads GIVDECCFQSCDLRRLEMYCA. The d stretch occupies residues 82–89; the sequence is PIKPPKSA. Positions 86–124 are disordered; that stretch reads PKSARSVRAQRHTDMPKAQKEVHLKNTSRGNTGNRNYRM. Residues 90-124 constitute a propeptide, e peptide; it reads RSVRAQRHTDMPKAQKEVHLKNTSRGNTGNRNYRM. Residues 96–109 are compositionally biased toward basic and acidic residues; it reads RHTDMPKAQKEVHL. The segment covering 110-124 has biased composition (polar residues); it reads KNTSRGNTGNRNYRM.

This sequence belongs to the insulin family.

The protein resides in the secreted. Its function is as follows. The insulin-like growth factors, isolated from plasma, are structurally and functionally related to insulin but have a much higher growth-promoting activity. Acts as a ligand for IGF1R. Binds to the alpha subunit of IGF1R, leading to the activation of the intrinsic tyrosine kinase activity which autophosphorylates tyrosine residues in the beta subunit thus initiatiating a cascade of down-stream signaling events leading to activation of the PI3K-AKT/PKB and the Ras-MAPK pathways. Binds to integrins. Its binding to integrins and subsequent ternary complex formation with integrins and IGFR1 are essential for IGF1 signaling. In Coturnix japonica (Japanese quail), this protein is Insulin-like growth factor 1.